We begin with the raw amino-acid sequence, 345 residues long: Fe-S cluster assembly protein DRE2 (345 aa).

The tract at residues 11–166 (FSHSSNGVVL…SIGSSSGSSS (156 aa)) is N-terminal SAM-like domain. The segment at 147-166 (SKPATASSSFSIGSSSGSSS) is disordered. Residues 153–166 (SSSFSIGSSSGSSS) are compositionally biased toward low complexity. Residues 167–210 (ALPLRRKLGSGASANAKKSLWATQPASANDLIDEASLLRDADFV) are linker. [2Fe-2S] cluster contacts are provided by C220, C233, C236, and C238. Residues 220 to 238 (CDVGAGQGKKKKACKGCTC) form a fe-S binding site A region. 4 residues coordinate [4Fe-4S] cluster: C307, C310, C318, and C321. 2 short sequence motifs (cx2C motif) span residues 307–310 (CGSC) and 318–321 (CSSC). Positions 307 to 321 (CGSCFLGDAFRCSSC) are fe-S binding site B.

The protein belongs to the anamorsin family. Monomer. Interacts with TAH18. Interacts with MIA40. The cofactor is [2Fe-2S] cluster. Requires [4Fe-4S] cluster as cofactor.

The protein resides in the cytoplasm. Its subcellular location is the mitochondrion intermembrane space. Component of the cytosolic iron-sulfur (Fe-S) protein assembly (CIA) machinery required for the maturation of extramitochondrial Fe-S proteins. Part of an electron transfer chain functioning in an early step of cytosolic Fe-S biogenesis, facilitating the de novo assembly of a [4Fe-4S] cluster on the scaffold complex CFD1-NBP35. Electrons are transferred to DRE2 from NADPH via the FAD- and FMN-containing protein TAH18. TAH18-DRE2 are also required for the assembly of the diferric tyrosyl radical cofactor of ribonucleotide reductase (RNR), probably by providing electrons for reduction during radical cofactor maturation in the catalytic small subunit RNR2. This chain is Fe-S cluster assembly protein DRE2, found in Mycosarcoma maydis (Corn smut fungus).